Reading from the N-terminus, the 174-residue chain is ATP synthase subunit d, mitochondrial (174 aa).

Ser2 is modified (N-acetylserine).

It belongs to the ATPase d subunit family. In terms of assembly, F-type ATPases have 2 components, CF(1) - the catalytic core - and CF(0) - the membrane proton channel. In yeast, the dimeric form of ATP synthase consists of 17 polypeptides: alpha, beta, gamma, delta, epsilon, 4 (B), 5 (OSCP), 6 (A), 8, 9 (C), d, E (Tim11), f, g, h, i/j and k.

The protein localises to the mitochondrion. It is found in the mitochondrion inner membrane. Its function is as follows. Mitochondrial membrane ATP synthase (F(1)F(0) ATP synthase or Complex V) produces ATP from ADP in the presence of a proton gradient across the membrane which is generated by electron transport complexes of the respiratory chain. F-type ATPases consist of two structural domains, F(1) - containing the extramembraneous catalytic core, and F(0) - containing the membrane proton channel, linked together by a central stalk and a peripheral stalk. During catalysis, ATP synthesis in the catalytic domain of F(1) is coupled via a rotary mechanism of the central stalk subunits to proton translocation. Part of the complex F(0) domain and the peripheric stalk, which acts as a stator to hold the catalytic alpha(3)beta(3) subcomplex and subunit a/ATP6 static relative to the rotary elements. In Saccharomyces cerevisiae (strain ATCC 204508 / S288c) (Baker's yeast), this protein is ATP synthase subunit d, mitochondrial (ATP7).